The sequence spans 53 residues: UPF0391 membrane protein YPDSF_3201 (53 aa).

Helical transmembrane passes span 4-24 (WGIIFLIIALIEAALGFGGLA) and 27-47 (AAWAAKVVFVVGIILFLISLF).

This sequence belongs to the UPF0391 family.

Its subcellular location is the cell membrane. The polypeptide is UPF0391 membrane protein YPDSF_3201 (Yersinia pestis (strain Pestoides F)).